A 282-amino-acid chain; its full sequence is Biotin synthase (282 aa).

Residues Met1–Arg228 enclose the Radical SAM core domain. [4Fe-4S] cluster-binding residues include Cys17, Cys21, and Cys24. Residues Cys61, Cys96, Cys154, and Arg221 each contribute to the [2Fe-2S] cluster site.

The protein belongs to the radical SAM superfamily. Biotin synthase family. As to quaternary structure, homodimer. The cofactor is [4Fe-4S] cluster. Requires [2Fe-2S] cluster as cofactor.

It catalyses the reaction (4R,5S)-dethiobiotin + (sulfur carrier)-SH + 2 reduced [2Fe-2S]-[ferredoxin] + 2 S-adenosyl-L-methionine = (sulfur carrier)-H + biotin + 2 5'-deoxyadenosine + 2 L-methionine + 2 oxidized [2Fe-2S]-[ferredoxin]. It participates in cofactor biosynthesis; biotin biosynthesis; biotin from 7,8-diaminononanoate: step 2/2. In terms of biological role, catalyzes the conversion of dethiobiotin (DTB) to biotin by the insertion of a sulfur atom into dethiobiotin via a radical-based mechanism. The protein is Biotin synthase of Helicobacter pylori (strain P12).